Here is a 154-residue protein sequence, read N- to C-terminus: Ribosomal RNA large subunit methyltransferase H (154 aa).

S-adenosyl-L-methionine is bound by residues Leu71 and Gly103.

This sequence belongs to the RNA methyltransferase RlmH family. As to quaternary structure, homodimer.

The protein localises to the cytoplasm. It carries out the reaction pseudouridine(1915) in 23S rRNA + S-adenosyl-L-methionine = N(3)-methylpseudouridine(1915) in 23S rRNA + S-adenosyl-L-homocysteine + H(+). In terms of biological role, specifically methylates the pseudouridine at position 1915 (m3Psi1915) in 23S rRNA. This is Ribosomal RNA large subunit methyltransferase H from Solidesulfovibrio magneticus (strain ATCC 700980 / DSM 13731 / RS-1) (Desulfovibrio magneticus).